A 256-amino-acid chain; its full sequence is uncharacterized protein (256 aa).

This is an uncharacterized protein from Bacillus subtilis (strain 168).